Reading from the N-terminus, the 429-residue chain is Glutamate-1-semialdehyde 2,1-aminomutase 2 (429 aa).

Lys-268 bears the N6-(pyridoxal phosphate)lysine mark.

It belongs to the class-III pyridoxal-phosphate-dependent aminotransferase family. HemL subfamily. In terms of assembly, homodimer. It depends on pyridoxal 5'-phosphate as a cofactor.

The protein resides in the cytoplasm. The catalysed reaction is (S)-4-amino-5-oxopentanoate = 5-aminolevulinate. It participates in porphyrin-containing compound metabolism; protoporphyrin-IX biosynthesis; 5-aminolevulinate from L-glutamyl-tRNA(Glu): step 2/2. This Bacillus cereus (strain AH187) protein is Glutamate-1-semialdehyde 2,1-aminomutase 2.